The following is a 737-amino-acid chain: UPF0507 protein YML002W (737 aa).

The 83-residue stretch at 1–83 (MDSHQLELPD…FEDFNKNTGN (83 aa)) folds into the VPS9 domain.

This sequence belongs to the UPF0507 family.

The polypeptide is UPF0507 protein YML002W (Saccharomyces cerevisiae (strain ATCC 204508 / S288c) (Baker's yeast)).